Reading from the N-terminus, the 149-residue chain is NPC intracellular cholesterol transporter 2 (149 aa).

An N-terminal signal peptide occupies residues 1–19 (MRFLAATILLLALVAASQA). Cystine bridges form between Cys-27-Cys-140, Cys-42-Cys-47, and Cys-93-Cys-99. Asn-58 and Asn-69 each carry an N-linked (GlcNAc...) asparagine glycan. An N6-acetyllysine modification is found at Lys-116.

Belongs to the NPC2 family. As to quaternary structure, interacts with NPC1 (via the second lumenal domain) in a cholestrol-dependent manner. Interacts with NUS1/NgBR, the interaction stabilizes NCP2 and regulates cholesterol trafficking. Interacts with DHDDS. Interacts with NEDD4L (via C2 domain). Interacts with NPC1L1. N-glycosylated. In terms of tissue distribution, detected in liver and bile. Detected in epididymis (at protein level). Detected in caput epididymis, corpus epididymis, cauda epididymis and ovary.

It is found in the secreted. It localises to the endoplasmic reticulum. The protein localises to the lysosome. It carries out the reaction cholesterol(in) = cholesterol(out). In terms of biological role, intracellular cholesterol transporter which acts in concert with NPC1 and plays an important role in the egress of cholesterol from the lysosomal compartment. Unesterified cholesterol that has been released from LDLs in the lumen of the late endosomes/lysosomes is transferred by NPC2 to the cholesterol-binding pocket in the N-terminal domain of NPC1. May bind and mobilize cholesterol that is associated with membranes. NPC2 binds cholesterol with a 1:1 stoichiometry. Can bind a variety of sterols, including lathosterol, desmosterol and the plant sterols stigmasterol and beta-sitosterol. The secreted form of NCP2 regulates biliary cholesterol secretion via stimulation of ABCG5/ABCG8-mediated cholesterol transport. In Mus musculus (Mouse), this protein is NPC intracellular cholesterol transporter 2.